We begin with the raw amino-acid sequence, 139 residues long: Protein Turandot B (139 aa).

The first 21 residues, 1 to 21 (MNFKTALICFALLLIGTLCSA), serve as a signal peptide directing secretion.

Belongs to the Turandot family.

The protein localises to the secreted. A humoral factor that may play a role in stress tolerance. This chain is Protein Turandot B, found in Drosophila sechellia (Fruit fly).